Here is a 387-residue protein sequence, read N- to C-terminus: Galactokinase (387 aa).

Substrate is bound at residue 33 to 36; it reads EHID. ATP-binding positions include Ser67 and 124–130; that span reads GAGLSSS. Residues Ser130 and Glu162 each contribute to the Mg(2+) site. Residue Asp174 is the Proton acceptor of the active site. Tyr224 is a substrate binding site.

Belongs to the GHMP kinase family. GalK subfamily.

It localises to the cytoplasm. The catalysed reaction is alpha-D-galactose + ATP = alpha-D-galactose 1-phosphate + ADP + H(+). It participates in carbohydrate metabolism; galactose metabolism. Its function is as follows. Catalyzes the transfer of the gamma-phosphate of ATP to D-galactose to form alpha-D-galactose-1-phosphate (Gal-1-P). The chain is Galactokinase from Clostridium perfringens (strain SM101 / Type A).